A 305-amino-acid polypeptide reads, in one-letter code: Energy-coupling factor transporter ATP-binding protein EcfA2 (305 aa).

The ABC transporter domain occupies 13-262 (LQNVDITFTN…KNLLQELLIE (250 aa)). 55-62 (GSTGSGKS) contributes to the ATP binding site.

This sequence belongs to the ABC transporter superfamily. Energy-coupling factor EcfA family. As to quaternary structure, forms a stable energy-coupling factor (ECF) transporter complex composed of 2 membrane-embedded substrate-binding proteins (S component), 2 ATP-binding proteins (A component) and 2 transmembrane proteins (T component).

The protein resides in the cell membrane. Its function is as follows. ATP-binding (A) component of a common energy-coupling factor (ECF) ABC-transporter complex. Unlike classic ABC transporters this ECF transporter provides the energy necessary to transport a number of different substrates. The protein is Energy-coupling factor transporter ATP-binding protein EcfA2 of Spiroplasma kunkelii.